Reading from the N-terminus, the 279-residue chain is UPF0173 metal-dependent hydrolase MXAN_1394 (279 aa).

The protein belongs to the UPF0173 family.

The protein is UPF0173 metal-dependent hydrolase MXAN_1394 of Myxococcus xanthus (strain DK1622).